Reading from the N-terminus, the 1341-residue chain is DNA-directed RNA polymerase subunit beta (1341 aa).

Belongs to the RNA polymerase beta chain family. As to quaternary structure, the RNAP catalytic core consists of 2 alpha, 1 beta, 1 beta' and 1 omega subunit. When a sigma factor is associated with the core the holoenzyme is formed, which can initiate transcription.

It carries out the reaction RNA(n) + a ribonucleoside 5'-triphosphate = RNA(n+1) + diphosphate. In terms of biological role, DNA-dependent RNA polymerase catalyzes the transcription of DNA into RNA using the four ribonucleoside triphosphates as substrates. The chain is DNA-directed RNA polymerase subunit beta from Vibrio cholerae serotype O1 (strain ATCC 39315 / El Tor Inaba N16961).